A 1995-amino-acid chain; its full sequence is Myosin-14 (1995 aa).

Residues 1 to 46 (MAAVTMSVPGRKAPPRPGPVPEAAQPFLFTPRGPSAGGGPGSGTSP) form a disordered region. Position 2 is an N-acetylalanine (alanine 2). Positions 51–101 (TARRLVWVPSELHGFEAAALRDEGEEEAEVELAESGRRLRLPRDQIQRMNP) constitute a Myosin N-terminal SH3-like domain. Serine 60 carries the post-translational modification Phosphoserine. In terms of domain architecture, Myosin motor spans 105–800 (SKAEDMAELT…VLAQLEEERD (696 aa)). 198-205 (GESGAGKT) serves as a coordination point for ATP. The segment at 678 to 700 (LSRLMATLSNTNPSFVRCIVPNH) is actin-binding. An IQ domain is found at 803–832 (VTDIIVSFQAAARGYLARRAFQKRQQQQSA). Residues 862–1947 (LQVTRQDEVL…VTTLRNRLRR (1086 aa)) are a coiled coil. At threonine 1194 the chain carries Phosphothreonine. Disordered regions lie at residues 1371 to 1415 (EEAA…RRAA), 1592 to 1623 (QHER…VERD), 1905 to 1942 (EAEE…TTLR), and 1958 to 1995 (RQVF…AHPQ). The span at 1930-1942 (SAESMNREVTTLR) shows a compositional bias: polar residues. A phosphoserine mark is found at serine 1969, serine 1980, serine 1983, and serine 1989. The segment covering 1981–1995 (GPSPEPEGSPPAHPQ) has biased composition (pro residues).

This sequence belongs to the TRAFAC class myosin-kinesin ATPase superfamily. Myosin family. In terms of assembly, myosin is a hexameric protein that consists of 2 heavy chain subunits (MHC), 2 alkali light chain subunits (MLC) and 2 regulatory light chain subunits (MLC-2). High levels of expression are found in brain (highest in corpus callosum), heart, kidney, liver, lung, small intestine, colon and skeletal muscle. Expression is low in organs composed mainly of smooth muscle, such as aorta, uterus and urinary bladder. No detectable expression is found in thymus, spleen, placenta and lymphocytes.

In terms of biological role, cellular myosin that appears to play a role in cytokinesis, cell shape, and specialized functions such as secretion and capping. The sequence is that of Myosin-14 (MYH14) from Homo sapiens (Human).